We begin with the raw amino-acid sequence, 429 residues long: Cell wall protein ECM33 (429 aa).

Positions 1–19 (MQFKNALTATAILSASALA) are cleaved as a signal peptide. N-linked (GlcNAc...) asparagine glycosylation is found at N21, N56, N82, N196, N209, N227, N234, N241, N267, N279, N304, and N328. At S339 the chain carries Phosphoserine. Residues 361 to 401 (LSSTSTESSKSSATSSASSSGDASNAQASVSASASSSSSSS) are compositionally biased toward low complexity. Residues 361 to 410 (LSSTSTESSKSSATSSASSSGDASNAQASVSASASSSSSSSKKSKGAAPE) form a disordered region. G406 carries GPI-anchor amidated glycine lipidation. Residues 407-429 (AAPELVPATSFMGVVAAVAVALL) constitute a propeptide, removed in mature form.

This sequence belongs to the SPS2 family. In terms of processing, the GPI-anchor is attached to the protein in the endoplasmic reticulum and serves to target the protein to the cell surface. There, the glucosamine-inositol phospholipid moiety is cleaved off and the GPI-modified mannoprotein is covalently attached via its lipidless GPI glycan remnant to the 1,6-beta-glucan of the outer cell wall layer.

Its subcellular location is the cell membrane. The protein localises to the secreted. It is found in the cell wall. Required for proper cell wall integrity and for the correct assembly of the mannoprotein outer layer of the cell wall. Important for apical bud growth. The sequence is that of Cell wall protein ECM33 (ECM33) from Saccharomyces cerevisiae (strain YJM789) (Baker's yeast).